The primary structure comprises 230 residues: Cytidylate kinase (230 aa).

ATP is bound at residue 12–20 (GPSGAGKGT).

This sequence belongs to the cytidylate kinase family. Type 1 subfamily.

The protein localises to the cytoplasm. It carries out the reaction CMP + ATP = CDP + ADP. The catalysed reaction is dCMP + ATP = dCDP + ADP. The sequence is that of Cytidylate kinase from Shewanella pealeana (strain ATCC 700345 / ANG-SQ1).